The chain runs to 466 residues: Cysteine--tRNA ligase (466 aa).

Residue cysteine 29 participates in Zn(2+) binding. The 'HIGH' region signature appears at proline 31–asparagine 41. Zn(2+) is bound by residues cysteine 210, histidine 235, and glutamate 239. The 'KMSKS' region motif lies at lysine 267–serine 271. Lysine 270 provides a ligand contact to ATP.

This sequence belongs to the class-I aminoacyl-tRNA synthetase family. In terms of assembly, monomer. The cofactor is Zn(2+).

The protein localises to the cytoplasm. It carries out the reaction tRNA(Cys) + L-cysteine + ATP = L-cysteinyl-tRNA(Cys) + AMP + diphosphate. The sequence is that of Cysteine--tRNA ligase from Solibacter usitatus (strain Ellin6076).